A 286-amino-acid polypeptide reads, in one-letter code: Uridylate cyclase (286 aa).

A Guanylate cyclase domain is found at 90 to 223; sequence TAIFVDIRKS…DAVTKAANMS (134 aa). Phenylalanine 93 contributes to the a ribonucleoside 5'-triphosphate binding site. Positions 95, 96, and 140 each coordinate Mn(2+).

The protein belongs to the adenylyl cyclase class-4/guanylyl cyclase family. Pyrimidine cyclase subfamily. As to quaternary structure, homodimer. Requires Mn(2+) as cofactor.

The protein localises to the cytoplasm. It carries out the reaction UTP = 3',5'-cyclic UMP + diphosphate. Pycsar (pyrimidine cyclase system for antiphage resistance) provides immunity against bacteriophage. The pyrimidine cyclase (PycC) synthesizes cyclic nucleotides in response to infection; these serve as specific second messenger signals. The signals activate the adjacent effector, leading to bacterial cell death and abortive phage infection. A clade C Pycsar system. In terms of biological role, the pyrimidine cyclase gene of a two-gene Pycsar system, weakly generates cyclic UMP (cUMP) from UTP, has little to no activity on ATP, CTP or GTP. Expression of this and adjacent effector TpPycTM (AC A0A1T4LJG1) probably confers resistance to bacteriophage. The genes are probably only expressed in response to bacteriophage infection. The protein is Uridylate cyclase of Treponema porcinum.